Reading from the N-terminus, the 164-residue chain is uncharacterized protein (164 aa).

The disordered stretch occupies residues 46-142; it reads GRSPEQKEHV…APDNSIYDTL (97 aa).

This is an uncharacterized protein from Caenorhabditis elegans.